Here is a 109-residue protein sequence, read N- to C-terminus: MTALPARGEVWWCEMAEIGRRPVVVLSRDAAIPRLRRALVAPCTTTIRGLASEVVLEPGSDPIPRRSAVNLDSVESVSVAVLVNRLGRLADIRMRAICTALEVAVDCSR.

This sequence belongs to the PemK/MazF family. As to quaternary structure, forms a complex with cognate antitoxin MazE5.

Functionally, toxic component of a type II toxin-antitoxin (TA) system. Upon expression in M.smegmatis inhibits colony formation. Its toxic effect is neutralized by coexpression with cognate antitoxin MazE5. Probably an endoribonuclease. The sequence is that of Probable endoribonuclease MazF5 (mazF5) from Mycobacterium tuberculosis (strain ATCC 25618 / H37Rv).